Consider the following 127-residue polypeptide: Cytochrome b-c1 complex subunit 7, mitochondrial (127 aa).

It belongs to the UQCRB/QCR7 family. In terms of assembly, component of the ubiquinol-cytochrome c oxidoreductase (cytochrome b-c1 complex, complex III, CIII), a multisubunit enzyme composed of 10 subunits. The complex is composed of 3 respiratory subunits cytochrome b (COB), cytochrome c1 (CYT1) and Rieske protein (RIP1), 2 core protein subunits COR1 and QCR2, and 5 low-molecular weight protein subunits QCR6, QCR7, QCR8, QCR9 and QCR10. The complex exists as an obligatory dimer and forms supercomplexes (SCs) in the inner mitochondrial membrane with a monomer or a dimer of cytochrome c oxidase (complex IV, CIV), resulting in 2 different assemblies (supercomplexes III(2)IV and III(2)IV(2)).

It localises to the mitochondrion inner membrane. Component of the ubiquinol-cytochrome c oxidoreductase, a multisubunit transmembrane complex that is part of the mitochondrial electron transport chain which drives oxidative phosphorylation. The respiratory chain contains 3 multisubunit complexes succinate dehydrogenase (complex II, CII), ubiquinol-cytochrome c oxidoreductase (cytochrome b-c1 complex, complex III, CIII) and cytochrome c oxidase (complex IV, CIV), that cooperate to transfer electrons derived from NADH and succinate to molecular oxygen, creating an electrochemical gradient over the inner membrane that drives transmembrane transport and the ATP synthase. The cytochrome b-c1 complex catalyzes electron transfer from ubiquinol to cytochrome c, linking this redox reaction to translocation of protons across the mitochondrial inner membrane, with protons being carried across the membrane as hydrogens on the quinol. In the process called Q cycle, 2 protons are consumed from the matrix, 4 protons are released into the intermembrane space and 2 electrons are passed to cytochrome c. The polypeptide is Cytochrome b-c1 complex subunit 7, mitochondrial (QCR7) (Saccharomyces cerevisiae (strain ATCC 204508 / S288c) (Baker's yeast)).